Consider the following 843-residue polypeptide: MTSIIKLKVFSGAKDEGPLCYLLQVDGDYILLDCGWDERFGLQYFEELKPFIPKISAVLISHPDPLHLGGLPYLVSKCGLTAPVYATVPVYKMGQMFIYDMVYSHLDVEEFEHYTLDDVDTAFEKVEQVKYNQTVVLKGDSGVHFTALPAGHMLGGSIWRICRVTGEDIVYCVDFNHKKERHLNGCSFDNFNRPHLLITGAHHISLPQMRRKDRDEQLVTKILRTVRQKGDCMIVIDTAGRVLELAHLLDQLWSNADAGLSTYNLVMMSHVASSVVQFAKSQLEWMNEKLFKYDSSSARYNPFTLKHVTLCHSHQELMRVRSPKVVLCSSQDMESGFSRELFLDWCSDPRNGVILTARPASFTLAAKLVNMAERANDGVLKHEDRLISLVVKKRVALEGEELLEYKRRKAERDAEETRLRMERARRQAQANESDDSDDDDIAAPIVPRHSEKDFRSFDGSENDAHTFDIMAKWDNQQKASFFKTTKKSFPMFPYIEEKVKWDDYGEVIKPEDYTVISKIDLRKGQNKDEPVVVKKREEEEEVYNPNDHVEEMPTKCVEFKNRVEVSCRIEFIEYEGISDGESTKKLLAGLLPRQIIVVHGSRDDTRDLVAYFADSGFDTTMLKAPEAGALVDASVESFIYQVALSDALLADIQFKEVSEGNSLAWIDARVMEKEAIDNMLAVGTSNLMIDDKNREEDVNDQEENGATEGEGNAEPMEIGENGSQESLAISESGKEVENGHTNDSRTKKGTKGKIRGNLILDPLPKRLIPIHQAVFVNDPKLSDFKNLLTDKGYKAEFLSGTLLINGGNCSIRRNDTGVFQMEGAFTKDYYKLRRLFYDQFAVL.

A compositionally biased stretch (basic and acidic residues) spans 414–425; the sequence is AEETRLRMERAR. 2 disordered regions span residues 414 to 443 and 691 to 753; these read AEET…DIAA and DKNR…TKGK. Positions 432–441 are enriched in acidic residues; sequence ESDDSDDDDI. Over residues 732 to 746 the composition is skewed to basic and acidic residues; sequence SGKEVENGHTNDSRT.

It belongs to the metallo-beta-lactamase superfamily. RNA-metabolizing metallo-beta-lactamase-like family. CPSF2/YSH1 subfamily. As to quaternary structure, CPSF is a heterotetramer composed of four distinct subunits 160, 100, 70 and 30 kDa.

It localises to the nucleus. In terms of biological role, CPSF plays a key role in pre-mRNA 3'-end formation, recognizing the AAUAAA signal sequence and interacting with poly(A)polymerase and other factors to bring about cleavage and poly(A) addition. The sequence is that of Probable cleavage and polyadenylation specificity factor subunit 2 (cpsf-2) from Caenorhabditis elegans.